Reading from the N-terminus, the 101-residue chain is Urease subunit beta (101 aa).

The protein belongs to the urease beta subunit family. Heterotrimer of UreA (gamma), UreB (beta) and UreC (alpha) subunits. Three heterotrimers associate to form the active enzyme.

Its subcellular location is the cytoplasm. The enzyme catalyses urea + 2 H2O + H(+) = hydrogencarbonate + 2 NH4(+). Its pathway is nitrogen metabolism; urea degradation; CO(2) and NH(3) from urea (urease route): step 1/1. This Saccharophagus degradans (strain 2-40 / ATCC 43961 / DSM 17024) protein is Urease subunit beta.